The primary structure comprises 178 residues: Imidazoleglycerol-phosphate dehydratase (178 aa).

The protein belongs to the imidazoleglycerol-phosphate dehydratase family.

It localises to the cytoplasm. The enzyme catalyses D-erythro-1-(imidazol-4-yl)glycerol 3-phosphate = 3-(imidazol-4-yl)-2-oxopropyl phosphate + H2O. The protein operates within amino-acid biosynthesis; L-histidine biosynthesis; L-histidine from 5-phospho-alpha-D-ribose 1-diphosphate: step 6/9. This chain is Imidazoleglycerol-phosphate dehydratase, found in Archaeoglobus fulgidus (strain ATCC 49558 / DSM 4304 / JCM 9628 / NBRC 100126 / VC-16).